A 222-amino-acid polypeptide reads, in one-letter code: Large ribosomal subunit protein uL4 (222 aa).

This sequence belongs to the universal ribosomal protein uL4 family. As to quaternary structure, part of the 50S ribosomal subunit.

Its function is as follows. One of the primary rRNA binding proteins, this protein initially binds near the 5'-end of the 23S rRNA. It is important during the early stages of 50S assembly. It makes multiple contacts with different domains of the 23S rRNA in the assembled 50S subunit and ribosome. In terms of biological role, forms part of the polypeptide exit tunnel. The polypeptide is Large ribosomal subunit protein uL4 (Acidobacterium capsulatum (strain ATCC 51196 / DSM 11244 / BCRC 80197 / JCM 7670 / NBRC 15755 / NCIMB 13165 / 161)).